The primary structure comprises 386 residues: Glycerate dehydrogenase HPR, peroxisomal (386 aa).

Residues 175-176 (RI), 271-273 (CSR), and Asp-297 contribute to the NAD(+) site. The active site involves Arg-273. Glu-302 is an active-site residue. His-320 acts as the Proton donor in catalysis. Residue 320–323 (HIAS) participates in NAD(+) binding. Positions 384-386 (SKL) match the Microbody targeting signal motif.

This sequence belongs to the D-isomer specific 2-hydroxyacid dehydrogenase family. Present in leaves (at protein level). Mostly expressed in photosynthetic tissues such as leaves, stems, flowers, buds, and, to a lower extent, in siliques and roots.

The protein resides in the peroxisome. It catalyses the reaction (R)-glycerate + NAD(+) = 3-hydroxypyruvate + NADH + H(+). Its pathway is photosynthesis; photorespiration; 3-phospho-D-glycerate from glycine: step 3/4. Slightly inhibited by oxalate. In terms of biological role, catalyzes the NADH-dependent reduction of hydroxypyruvate into glycerate in the photorespiratory core cycle. Mediates fatty acid beta-oxidation in germinating seeds when malate dehydrogenase is absent. The sequence is that of Glycerate dehydrogenase HPR, peroxisomal (HPR) from Arabidopsis thaliana (Mouse-ear cress).